The chain runs to 97 residues: MTLFSSISSISSSISSSKSSIASFGNGTSMGSNSIACGGGCGSGNGFGGIFIGANIDLTGGASTSSGGRGGRPGRGHGGPHGHGRGGSGSGSSCGCN.

Disordered regions lie at residues 1 to 22 (MTLF…SSIA) and 62 to 97 (ASTS…CGCN). The span at 72–84 (RPGRGHGGPHGHG) shows a compositional bias: basic residues. The segment covering 85–97 (RGGSGSGSSCGCN) has biased composition (gly residues).

This sequence belongs to the hssA/B family.

This is HssA/B-like protein 44 (hssl44) from Dictyostelium discoideum (Social amoeba).